We begin with the raw amino-acid sequence, 71 residues long: Large ribosomal subunit protein bL31 (71 aa).

Zn(2+) contacts are provided by Cys-16, Cys-18, Cys-37, and Cys-40.

This sequence belongs to the bacterial ribosomal protein bL31 family. Type A subfamily. Part of the 50S ribosomal subunit. Zn(2+) serves as cofactor.

Functionally, binds the 23S rRNA. This Nitratidesulfovibrio vulgaris (strain ATCC 29579 / DSM 644 / CCUG 34227 / NCIMB 8303 / VKM B-1760 / Hildenborough) (Desulfovibrio vulgaris) protein is Large ribosomal subunit protein bL31.